The chain runs to 377 residues: TelA-like protein SSP1345 (377 aa).

Residues 1–18 (MAREQDSINSHPLDKYID) show a composition bias toward basic and acidic residues. Residues 1-39 (MAREQDSINSHPLDKYIDENSANESEIIKSSSQFSHEDQ) form a disordered region. Over residues 20-34 (NSANESEIIKSSSQF) the composition is skewed to polar residues.

It belongs to the TelA family.

This chain is TelA-like protein SSP1345, found in Staphylococcus saprophyticus subsp. saprophyticus (strain ATCC 15305 / DSM 20229 / NCIMB 8711 / NCTC 7292 / S-41).